We begin with the raw amino-acid sequence, 344 residues long: Arginine N-succinyltransferase (344 aa).

A succinyl-CoA-binding site is contributed by L125. H229 (proton donor) is an active-site residue.

It belongs to the arginine N-succinyltransferase family.

The enzyme catalyses succinyl-CoA + L-arginine = N(2)-succinyl-L-arginine + CoA + H(+). It participates in amino-acid degradation; L-arginine degradation via AST pathway; L-glutamate and succinate from L-arginine: step 1/5. Its function is as follows. Catalyzes the transfer of succinyl-CoA to arginine to produce N(2)-succinylarginine. This Salmonella agona (strain SL483) protein is Arginine N-succinyltransferase.